A 283-amino-acid polypeptide reads, in one-letter code: MTDSNNWYIEHFERTGSAIGYRITGKLDEVQSPFQKIEIFRTTDWGNLMTIDGAIMLTSKDNFFYHEMISHPVLFTHAAPKRVVIIGGGDCGTLREVLKHKGVESVTQCDIDEQVTVMARKHFPELCDSNDDARAELLFDDGVAYMANCPAGSVDVVIVDSTDPVGPGEGLFNKAFYASCFKALKDDGILVQQSESPLMQLELINEMRTEMGKAGFGSFKTLPFPQPCYPTGWWSVTLARKGESSFDFRQADSAAKTFETLYYTAALHTGVLVTPPFVQAALK.

Positions 5–241 (NNWYIEHFER…GWWSVTLARK (237 aa)) constitute a PABS domain. Position 35 (Gln-35) interacts with S-methyl-5'-thioadenosine. The spermidine site is built by His-66 and Asp-90. Residues Asp-110 and 141 to 142 (DG) contribute to the S-methyl-5'-thioadenosine site. Catalysis depends on Asp-160, which acts as the Proton acceptor. 160–163 (DSTD) contacts spermidine. Residue Pro-167 coordinates S-methyl-5'-thioadenosine.

The protein belongs to the spermidine/spermine synthase family. Homodimer or homotetramer.

Its subcellular location is the cytoplasm. The enzyme catalyses S-adenosyl 3-(methylsulfanyl)propylamine + putrescine = S-methyl-5'-thioadenosine + spermidine + H(+). It participates in amine and polyamine biosynthesis; spermidine biosynthesis; spermidine from putrescine: step 1/1. Catalyzes the irreversible transfer of a propylamine group from the amino donor S-adenosylmethioninamine (decarboxy-AdoMet) to putrescine (1,4-diaminobutane) to yield spermidine. The polypeptide is Polyamine aminopropyltransferase (Stenotrophomonas maltophilia (strain R551-3)).